We begin with the raw amino-acid sequence, 263 residues long: tRNA1(Val) (adenine(37)-N6)-methyltransferase (263 aa).

This sequence belongs to the methyltransferase superfamily. tRNA (adenine-N(6)-)-methyltransferase family.

The protein resides in the cytoplasm. It catalyses the reaction adenosine(37) in tRNA1(Val) + S-adenosyl-L-methionine = N(6)-methyladenosine(37) in tRNA1(Val) + S-adenosyl-L-homocysteine + H(+). In terms of biological role, specifically methylates the adenine in position 37 of tRNA(1)(Val) (anticodon cmo5UAC). The polypeptide is tRNA1(Val) (adenine(37)-N6)-methyltransferase (Salmonella choleraesuis (strain SC-B67)).